We begin with the raw amino-acid sequence, 451 residues long: Histidinol dehydrogenase (451 aa).

The segment at 1–20 (MLNVTDLRGHTPSKSDIRRA) is disordered. A compositionally biased stretch (basic and acidic residues) spans 7 to 19 (LRGHTPSKSDIRR). Residues Tyr129, Gln193, and Asn218 each contribute to the NAD(+) site. 3 residues coordinate substrate: Thr241, Gln263, and His266. Residues Gln263 and His266 each coordinate Zn(2+). Catalysis depends on proton acceptor residues Glu332 and His333. 4 residues coordinate substrate: His333, Asp366, Glu420, and His425. Residue Asp366 coordinates Zn(2+). Residue His425 coordinates Zn(2+).

This sequence belongs to the histidinol dehydrogenase family. It depends on Zn(2+) as a cofactor.

It carries out the reaction L-histidinol + 2 NAD(+) + H2O = L-histidine + 2 NADH + 3 H(+). The protein operates within amino-acid biosynthesis; L-histidine biosynthesis; L-histidine from 5-phospho-alpha-D-ribose 1-diphosphate: step 9/9. Its function is as follows. Catalyzes the sequential NAD-dependent oxidations of L-histidinol to L-histidinaldehyde and then to L-histidine. The protein is Histidinol dehydrogenase of Corynebacterium efficiens (strain DSM 44549 / YS-314 / AJ 12310 / JCM 11189 / NBRC 100395).